Here is a 1490-residue protein sequence, read N- to C-terminus: ABC transporter CDR4 (1490 aa).

The segment covering 1-12 has biased composition (polar residues); that stretch reads MADADTSSNSSK. 2 disordered regions span residues 1–26 and 53–75; these read MADA…GTYQ and LKRQ…LSGK. Residues 1 to 516 lie on the Cytoplasmic side of the membrane; it reads MADADTSSNS…NILRIKGNPS (516 aa). Residues 58–67 are compositionally biased toward basic and acidic residues; that stretch reads SRQESQKSNE. The ABC transporter 1 domain maps to 151 to 407; the sequence is PKYLSLFFRE…FIDMGYECPQ (257 aa). 6 helical membrane passes run 517–537, 551–571, 601–621, 626–646, 659–679, and 767–787; these read IHLF…SIFY, AALF…IFSL, LPTK…MVNF, GNFF…SHIF, AMTP…FVIP, and FGIV…LCEI. At 788–1182 the chain is on the cytoplasmic side; sequence NKGAMQKGEI…VFEQNWRTPS (395 aa). In terms of domain architecture, ABC transporter 2 spans 846 to 1090; it reads FFWRDLTYQV…LINYFEKYGA (245 aa). ATP is bound at residue 882 to 889; sequence GASGAGKT. 3 helical membrane-spanning segments follow: residues 1183–1203, 1217–1237, and 1268–1288; these read YLYS…FSFY, FSVF…LPTF, and IPWN…PVGL. Residue Asn1291 is glycosylated (N-linked (GlcNAc...) asparagine). A run of 3 helical transmembrane segments spans residues 1304 to 1324, 1333 to 1353, and 1370 to 1390; these read FMWF…QLCI, AANL…VLVT, and FTYL…VTCA. Asn1424 carries N-linked (GlcNAc...) asparagine glycosylation. The helical transmembrane segment at 1455–1475 threads the bilayer; sequence IGIYIAFIGINIIGTFILYWF.

This sequence belongs to the ABC transporter superfamily. ABCG family. PDR (TC 3.A.1.205) subfamily.

Its subcellular location is the membrane. The sequence is that of ABC transporter CDR4 (CDR4) from Candida albicans (Yeast).